The sequence spans 468 residues: Proline--tRNA ligase (468 aa).

It belongs to the class-II aminoacyl-tRNA synthetase family. ProS type 3 subfamily. As to quaternary structure, homodimer.

The protein localises to the cytoplasm. The catalysed reaction is tRNA(Pro) + L-proline + ATP = L-prolyl-tRNA(Pro) + AMP + diphosphate. Catalyzes the attachment of proline to tRNA(Pro) in a two-step reaction: proline is first activated by ATP to form Pro-AMP and then transferred to the acceptor end of tRNA(Pro). The chain is Proline--tRNA ligase from Frankia casuarinae (strain DSM 45818 / CECT 9043 / HFP020203 / CcI3).